A 445-amino-acid polypeptide reads, in one-letter code: Methylenetetrahydrofolate--tRNA-(uracil-5-)-methyltransferase TrmFO (445 aa).

9–14 (GGGLAG) lines the FAD pocket.

The protein belongs to the MnmG family. TrmFO subfamily. It depends on FAD as a cofactor.

The protein localises to the cytoplasm. It catalyses the reaction uridine(54) in tRNA + (6R)-5,10-methylene-5,6,7,8-tetrahydrofolate + NADH + H(+) = 5-methyluridine(54) in tRNA + (6S)-5,6,7,8-tetrahydrofolate + NAD(+). It carries out the reaction uridine(54) in tRNA + (6R)-5,10-methylene-5,6,7,8-tetrahydrofolate + NADPH + H(+) = 5-methyluridine(54) in tRNA + (6S)-5,6,7,8-tetrahydrofolate + NADP(+). Catalyzes the folate-dependent formation of 5-methyl-uridine at position 54 (M-5-U54) in all tRNAs. This Rhizorhabdus wittichii (strain DSM 6014 / CCUG 31198 / JCM 15750 / NBRC 105917 / EY 4224 / RW1) (Sphingomonas wittichii) protein is Methylenetetrahydrofolate--tRNA-(uracil-5-)-methyltransferase TrmFO.